Here is a 194-residue protein sequence, read N- to C-terminus: Xanthine phosphoribosyltransferase (194 aa).

Residues leucine 20 and asparagine 27 each contribute to the xanthine site. Position 128 to 132 (128 to 132) interacts with 5-phospho-alpha-D-ribose 1-diphosphate; sequence ANGQA. Lysine 156 contacts xanthine.

Belongs to the purine/pyrimidine phosphoribosyltransferase family. Xpt subfamily. As to quaternary structure, homodimer.

It localises to the cytoplasm. It catalyses the reaction XMP + diphosphate = xanthine + 5-phospho-alpha-D-ribose 1-diphosphate. Its pathway is purine metabolism; XMP biosynthesis via salvage pathway; XMP from xanthine: step 1/1. Its function is as follows. Converts the preformed base xanthine, a product of nucleic acid breakdown, to xanthosine 5'-monophosphate (XMP), so it can be reused for RNA or DNA synthesis. The sequence is that of Xanthine phosphoribosyltransferase from Oceanobacillus iheyensis (strain DSM 14371 / CIP 107618 / JCM 11309 / KCTC 3954 / HTE831).